We begin with the raw amino-acid sequence, 411 residues long: Methylthioribose-1-phosphate isomerase (411 aa).

Position 2 is an N-acetylserine (Ser2). Asp280 acts as the Proton donor in catalysis. Ser351 carries the phosphoserine modification.

Belongs to the eIF-2B alpha/beta/delta subunits family. MtnA subfamily. In terms of assembly, homodimer.

It is found in the cytoplasm. It localises to the nucleus. The catalysed reaction is 5-(methylsulfanyl)-alpha-D-ribose 1-phosphate = 5-(methylsulfanyl)-D-ribulose 1-phosphate. The protein operates within amino-acid biosynthesis; L-methionine biosynthesis via salvage pathway; L-methionine from S-methyl-5-thio-alpha-D-ribose 1-phosphate: step 1/6. Catalyzes the interconversion of methylthioribose-1-phosphate (MTR-1-P) into methylthioribulose-1-phosphate (MTRu-1-P). The chain is Methylthioribose-1-phosphate isomerase from Saccharomyces cerevisiae (strain RM11-1a) (Baker's yeast).